A 231-amino-acid chain; its full sequence is Uracil phosphoribosyltransferase (231 aa).

Residue 38–42 coordinates GTP; the sequence is KGLVR. 5-phospho-alpha-D-ribose 1-diphosphate is bound by residues Arg87, Arg112, and 140–148; that span reads DPMIATGST. Residues Ile203 and 208–210 each bind uracil; that span reads GDA. A 5-phospho-alpha-D-ribose 1-diphosphate-binding site is contributed by Asp209.

The protein belongs to the UPRTase family. Mg(2+) serves as cofactor.

The enzyme catalyses UMP + diphosphate = 5-phospho-alpha-D-ribose 1-diphosphate + uracil. The protein operates within pyrimidine metabolism; UMP biosynthesis via salvage pathway; UMP from uracil: step 1/1. With respect to regulation, allosterically activated by GTP. Functionally, catalyzes the conversion of uracil and 5-phospho-alpha-D-ribose 1-diphosphate (PRPP) to UMP and diphosphate. This chain is Uracil phosphoribosyltransferase, found in Methanococcus maripaludis (strain DSM 14266 / JCM 13030 / NBRC 101832 / S2 / LL).